The sequence spans 232 residues: Aquaporin Z 2 (232 aa).

The next 2 membrane-spanning stretches (helical) occupy residues 9 to 29 and 32 to 52; these read FLGT…ASAF and VGIG…TMAY. The NPA 1 signature appears at 63 to 65; it reads NPA. 3 helical membrane-spanning segments follow: residues 82–102, 129–149, and 158–178; these read VSYV…LYVI, LTAA…IILG, and GFAP…SIPV. The NPA 2 signature appears at 184 to 186; that stretch reads NPA. A helical membrane pass occupies residues 200–220; sequence LSQLWLFWIAPLFGAAIAGIV.

This sequence belongs to the MIP/aquaporin (TC 1.A.8) family. As to quaternary structure, homotetramer.

It is found in the cell inner membrane. It catalyses the reaction H2O(in) = H2O(out). Channel that permits osmotically driven movement of water in both directions. It is involved in the osmoregulation and in the maintenance of cell turgor during volume expansion in rapidly growing cells. It mediates rapid entry or exit of water in response to abrupt changes in osmolarity. This chain is Aquaporin Z 2, found in Rhizobium meliloti (strain 1021) (Ensifer meliloti).